A 419-amino-acid polypeptide reads, in one-letter code: D-amino acid dehydrogenase (419 aa).

3–17 (VIVLGSGVIGVASAY) contributes to the FAD binding site.

Belongs to the DadA oxidoreductase family. FAD is required as a cofactor.

The enzyme catalyses a D-alpha-amino acid + A + H2O = a 2-oxocarboxylate + AH2 + NH4(+). It participates in amino-acid degradation; D-alanine degradation; NH(3) and pyruvate from D-alanine: step 1/1. Oxidative deamination of D-amino acids. In Acinetobacter baylyi (strain ATCC 33305 / BD413 / ADP1), this protein is D-amino acid dehydrogenase.